A 234-amino-acid chain; its full sequence is Sugar fermentation stimulation protein A (234 aa).

A DNA-binding region (H-T-H motif) is located at residues Leu-201 to Ser-220.

Belongs to the SfsA family.

Its function is as follows. Binds to DNA non-specifically. Could be a regulatory factor involved in maltose metabolism. The polypeptide is Sugar fermentation stimulation protein A (Salmonella agona (strain SL483)).